The primary structure comprises 181 residues: ECF RNA polymerase sigma factor EcfG (181 aa).

A sigma-70 factor domain-2 region spans residues 15–77 (VPSLRAFAIS…FRSDYRKRRR (63 aa)). Residues 103-155 (EEFRAALDKLPQDQREALILVGASGFSYEDAAAICGCAVGTIKSRVNRARSKL) form a sigma-70 factor domain-4 region.

Belongs to the sigma-70 factor family. ECF subfamily.

Sigma factors are initiation factors that promote the attachment of RNA polymerase to specific initiation sites and are then released. Regulates expression of hpnP under a variety of stresses, including high temperature, pH stress, and presence of nonionic osmolytes. The chain is ECF RNA polymerase sigma factor EcfG from Rhodopseudomonas palustris (strain TIE-1).